A 357-amino-acid chain; its full sequence is Elongation factor Ts (357 aa).

The tract at residues 82-85 is involved in Mg(2+) ion dislocation from EF-Tu; it reads TDFV.

This sequence belongs to the EF-Ts family.

It is found in the cytoplasm. Its function is as follows. Associates with the EF-Tu.GDP complex and induces the exchange of GDP to GTP. It remains bound to the aminoacyl-tRNA.EF-Tu.GTP complex up to the GTP hydrolysis stage on the ribosome. In Campylobacter jejuni subsp. jejuni serotype O:23/36 (strain 81-176), this protein is Elongation factor Ts.